The sequence spans 399 residues: MKILVINSGSSSIKFKFYDLKIQKCLASGMIEQIGDEVSHSKIETCDGKTIEENMEIRTHDEGIVILNRYLKETGVLTDLKEIDGVGHRIVQGADYFEGPALVDDDVITKIEELIPLAPLHNPAHLSGIRSSLRHAPCLPNVVVFDNTFYHNIPDYAYMYALPYKFYEKYRVRKFGAHGISHEFVTKKGADFLGIDYKNFCVISLHIGSGSSISATKDGICIDTSMGLTPLEGLMMSTRCGSVDPAIIPYMKRVAGYLSEDIDTIMNKKSGLLGITGTSDFRKVLERMHKGDERAKLAFDMLTYQIVKIIGSYYAILPRVDAIIWTAGIGENSAELRESVSKRLAHFGVGVDETVNVNCIKKPTDISSQNATIKTLVIPTDEEYSIAKATERILLSLKK.

Asn7 contributes to the Mg(2+) binding site. ATP is bound at residue Lys14. Position 89 (Arg89) interacts with substrate. Asp146 (proton donor/acceptor) is an active-site residue. ATP contacts are provided by residues His206–Gly210, Asp280–Arg282, and Gly328–Asn332. Glu382 provides a ligand contact to Mg(2+).

This sequence belongs to the acetokinase family. Homodimer. Mg(2+) is required as a cofactor. The cofactor is Mn(2+).

Its subcellular location is the cytoplasm. The catalysed reaction is acetate + ATP = acetyl phosphate + ADP. The protein operates within metabolic intermediate biosynthesis; acetyl-CoA biosynthesis; acetyl-CoA from acetate: step 1/2. In terms of biological role, catalyzes the formation of acetyl phosphate from acetate and ATP. Can also catalyze the reverse reaction. The chain is Acetate kinase from Campylobacter hominis (strain ATCC BAA-381 / DSM 21671 / CCUG 45161 / LMG 19568 / NCTC 13146 / CH001A).